The sequence spans 141 residues: MAVQRTFSIIKPDAVAKNVIGKITTRFEEAGLKIVASKIKQLSKAEAEGFYAEHSARGFFGDLVAFMTSGPVVVQVLEGENAIALNRELMGATNPKEAAPGTIRADFAESIDANAVHGSDSEAAAAREIAYFFAATEVTTR.

Positions 11, 59, 87, 93, 104, and 114 each coordinate ATP. The Pros-phosphohistidine intermediate role is filled by histidine 117.

Belongs to the NDK family. In terms of assembly, homotetramer. Requires Mg(2+) as cofactor.

It localises to the cytoplasm. The catalysed reaction is a 2'-deoxyribonucleoside 5'-diphosphate + ATP = a 2'-deoxyribonucleoside 5'-triphosphate + ADP. The enzyme catalyses a ribonucleoside 5'-diphosphate + ATP = a ribonucleoside 5'-triphosphate + ADP. In terms of biological role, major role in the synthesis of nucleoside triphosphates other than ATP. The ATP gamma phosphate is transferred to the NDP beta phosphate via a ping-pong mechanism, using a phosphorylated active-site intermediate. This Pseudomonas entomophila (strain L48) protein is Nucleoside diphosphate kinase.